A 419-amino-acid chain; its full sequence is Acetyltransferase fsoF (419 aa).

N-linked (GlcNAc...) asparagine glycosylation occurs at Asn-2. A run of 2 helical transmembrane segments spans residues 4–24 (TIISLALIFFQLTTTALVVGF) and 62–82 (AFLGAASVFLVILYVDAAILS). Residues 89–114 (QSPTSSLGGLIPPTTRDTPKTQNNAT) are disordered. 2 N-linked (GlcNAc...) asparagine glycosylation sites follow: Asn-112 and Asn-169. 4 helical membrane-spanning segments follow: residues 230-250 (YWAIQYAVIDLLYSLLAVVAV), 314-334 (YVFMTLVFAVSGVFHTLSDVS), 337-357 (IPLGESGAMRFFVLQAIGIML), and 386-406 (VSGPVWLVTWLTWTSPGWIYM).

Belongs to the wax synthase family.

Its subcellular location is the membrane. It carries out the reaction 3-O-(beta-D-glucopyranosyl)-2alpha-hydroxyisomotiol + acetyl-CoA = 3-O-(beta-D-glucopyranosyl)-2alpha-acetoxyisomotiol + CoA. It catalyses the reaction 2-deacetylfuscoatroside + acetyl-CoA = fuscoatroside + CoA. The protein operates within secondary metabolite biosynthesis; terpenoid biosynthesis. Functionally, terpene cyclase-glycosyl transferase fusion protein; part of the gene cluster that mediates the biosynthesis of the enfumafungin-type antibiotic, fuscoatroside. Within the pathway, fsoF catalyzes the acetylation of C2-alpha-OH following the C2 hydroxylation by the cytochrome monooxygenase fsoD. The fuscoatroside biosynthesis is initiated by the cyclization of 2,3(S)-oxidosqualene through FsoA's terpene cyclase (TC) domain, leading to the formation of the fernane skeleton isomotiol, harboring a fernane triterpene skeleton with a C8-C9 double bond. Subsequently, C2-alpha-hydroxylation mediated by fsoD results in the production of 2-alpha-hydroxy-isomotiol, which is further acetylated by fsoF. The glycosyltransferase (GT) domain of FsoA may convert isomotiol, 2-alpha-hydroxy-isomotiol, and the acetylated derivative of 2-alpha-hydroxy-isomotiol into their corresponding glycosides 3-O-(beta-D-glucopyranosyl)-isomotiol, 3-O-(beta-D-glucopyranosyl)-2-alpha-hydroxy-isomotiol, and 3-O-(beta-D-glucopyranosyl)-2-alpha-acetoxy-isomotiol, which then undergo oxidative cleavage under the action of fsoE to form s 2-deacetoxy-fuscoatroside, 2-deacetyl-fuscoatroside, and fuscoatroside, respectively. Although hydroxylation followed by acetylation of 3-O-(beta-D-glucopyranosyl)-isomotiol and 2-deacetoxy-fuscoatroside by fsoD and fsoF could not be ruled out, this process is likely to occur with difficulty due to bulky steric hindrance caused by the presence of a glycan at C3 in these compounds. Interestingly, fsoE can also utilize the aglycones isomotiol and 2-alpha-hydroxy-isomotiol as substrates to generate 19-beta-hydroxy-isomotiol and 2-alpha,19-beta-dihydroxy-isomotiol, respectively. These reactions occur with lower efficiency. Finally, fsoE can further convert 2-alpha,19-beta-dihydroxy-isomotiol into 2-alpha-hydroxy-ismotiol-19-one and 2-alpha-hydroxy-ismotiol-19-one into 2-deacetyl-3-deglucopyranosyl-fuscoatroside. This chain is Acetyltransferase fsoF, found in Humicola fuscoatra.